Consider the following 891-residue polypeptide: Microtubule-associated protein 10 (891 aa).

Disordered regions lie at residues 325–355 (AAVQESPPVLPNLPQTQGPGEANEAPCPPQI), 401–457 (EDKG…VTKG), 504–679 (SWKG…KSSC), and 702–844 (TTEN…SNLS). Low complexity predominate over residues 407 to 417 (PSTKSTSPSES). Polar residues-rich tracts occupy residues 509–520 (VSSSAAESQMSP) and 527–544 (PTDSNGKLPSLAVQSQLP). 2 stretches are compositionally biased toward basic and acidic residues: residues 577–592 (STTKEVKQSHAMKQEM) and 645–658 (TVDKTVDEGKDGRQ). Composition is skewed to polar residues over residues 665–679 (ADTSENRPTSRKSSC), 702–718 (TTENNSRSLPAPDSSTG), 726–749 (SRASKSSEARLSTRKNSSDSSSVL), 776–790 (EASSLSTSDFSSQWT), and 826–844 (KSQSPRTSQVSSYEPSNLS).

Interacts (via middle region) with microtubules.

The protein resides in the cytoplasm. It is found in the cytoskeleton. It localises to the spindle pole. The protein localises to the microtubule organizing center. Its subcellular location is the centrosome. The protein resides in the midbody. Its function is as follows. Microtubule-associated protein (MAP) that plays a role in the regulation of cell division; promotes microtubule stability and participates in the organization of the spindle midzone and normal progress of cytokinesis. This Mus musculus (Mouse) protein is Microtubule-associated protein 10 (Map10).